We begin with the raw amino-acid sequence, 103 residues long: Large ribosomal subunit protein bL21 (103 aa).

Belongs to the bacterial ribosomal protein bL21 family. In terms of assembly, part of the 50S ribosomal subunit. Contacts protein L20.

Functionally, this protein binds to 23S rRNA in the presence of protein L20. The sequence is that of Large ribosomal subunit protein bL21 from Acidovorax ebreus (strain TPSY) (Diaphorobacter sp. (strain TPSY)).